The following is a 721-amino-acid chain: MSVKEKIPAFNTQEDLESYISLNAYTKVYGDFKMDLHAVEAYIQEHVKPKTKVFHSTKERLDFLVKNDYYDENIINMYSFEQFEEITRKAYAYRFRYANFMGAFKFYNAYALKTFDGKWYLENYEDRVVMNVLFLANGNYNKALKLLKQIITNRFQPATPTFLNAGRKKRGEFVSCYLLRIEDNMESIGRAITTTLQLSKRDGGVALLLTNIRESGAPIKKIENQSSGIIPIMKLLEDSFSYANQLGQRQGAGAVYLHAHHPDVMQFLDTKRENADEKIRIKSLSLGLVIPDITFTLAKNNEEMALFSPYDVYEEYGKPLSDISVTEMYYELLANQRIKKTFINARKFFQTVAELHFESGYPYILFDDTVNRRNAHPNRIVMSNLCSEIVQPSTPSEFHHDLAFKKVGNDISCNLGSLNIAKAMESGPEFSELVKLAIESLDLVSRVSNLETAPSIQKGNSENHALGLGAMNLHGFLATNQIYYNSPEAIDFTNIFFYTVAYHAFKASSELALEKGKFKNFENTKFADGSYFDKYIKVEPDFWTPKTERVKALFQKYQVEIPTRENWKELALNIQKNGLANSHLLAIAPTGSISYLSSCTPSLQPVVSPVEVRKEGRLGRIYVPAYQLNKDSYPFYKDGAYELGPEPIINIAAAAQQHVDQAISLTLFMTDKATTRDLNKAYIYAFKKGCSSIYYVRVRQEVLEDSEDHTIQMQQCEACVI.

Substrate-binding positions include threonine 159, 175-176 (SC), glycine 204, 384-388 (NLCSE), and 589-593 (PTGSI). A disulfide bond links cysteine 176 and cysteine 413. Residue asparagine 384 is the Proton acceptor of the active site. Cysteine 386 (cysteine radical intermediate) is an active-site residue. Glutamate 388 acts as the Proton acceptor in catalysis.

It belongs to the ribonucleoside diphosphate reductase large chain family. In terms of assembly, tetramer of two alpha and two beta subunits.

The enzyme catalyses a 2'-deoxyribonucleoside 5'-diphosphate + [thioredoxin]-disulfide + H2O = a ribonucleoside 5'-diphosphate + [thioredoxin]-dithiol. Under complex allosteric control mediated by deoxynucleoside triphosphates and ATP binding. The type of nucleotide bound at the specificity site determines substrate preference. It seems probable that ATP makes the enzyme reduce CDP and UDP, dGTP favors ADP reduction and dTTP favors GDP reduction. Functionally, provides the precursors necessary for DNA synthesis. Catalyzes the biosynthesis of deoxyribonucleotides from the corresponding ribonucleotides. This chain is Ribonucleoside-diphosphate reductase subunit alpha (nrdE), found in Mycoplasma pneumoniae (strain ATCC 29342 / M129 / Subtype 1) (Mycoplasmoides pneumoniae).